A 131-amino-acid polypeptide reads, in one-letter code: Translation initiation factor 5A (131 aa).

Lys-37 carries the hypusine modification.

The protein belongs to the eIF-5A family.

The protein resides in the cytoplasm. Functions by promoting the formation of the first peptide bond. This is Translation initiation factor 5A from Methanococcus maripaludis (strain DSM 14266 / JCM 13030 / NBRC 101832 / S2 / LL).